The following is a 354-amino-acid chain: Selenide, water dikinase (354 aa).

The active site involves C23. ATP contacts are provided by residues K26 and 54-56; that span reads TAD. Mg(2+) is bound at residue D57. Residues D74, D97, and 145-147 contribute to the ATP site; that span reads GHS. D97 is a binding site for Mg(2+). Position 233 (D233) interacts with Mg(2+).

It belongs to the selenophosphate synthase 1 family. Class I subfamily. In terms of assembly, homodimer. Requires Mg(2+) as cofactor.

It catalyses the reaction hydrogenselenide + ATP + H2O = selenophosphate + AMP + phosphate + 2 H(+). Synthesizes selenophosphate from selenide and ATP. The polypeptide is Selenide, water dikinase (Paraburkholderia xenovorans (strain LB400)).